Consider the following 1182-residue polypeptide: Protein patched homolog 2 (1182 aa).

The Cytoplasmic portion of the chain corresponds to 1 to 57; it reads MVRPLSLGELPPSYTPPARSSAPHILAGSLQAPLWLRAYFQGLLFSLGCRIQKHCGK. The helical transmembrane segment at 58–78 threads the bilayer; sequence VLFLGLVAFGALALGLRVAVI. The Extracellular segment spans residues 79 to 394; the sequence is ETDLEQLWVE…DILRAFSEVS (316 aa). Asn370 carries N-linked (GlcNAc...) asparagine glycosylation. Residues 394 to 552 enclose the SSD domain; the sequence is STTRVVGGYL…MLVFPAILSL (159 aa). The helical transmembrane segment at 395 to 414 threads the bilayer; that stretch reads TTRVVGGYLLMLAYACVTML. The Cytoplasmic portion of the chain corresponds to 415-428; it reads RWDCAQSQGAVGLA. Residues 429-449 form a helical membrane-spanning segment; the sequence is GVLLVALAVASGLGLCALLGI. At 450–457 the chain is on the extracellular side; that stretch reads TFNAATTQ. The chain crosses the membrane as a helical span at residues 458–478; the sequence is VLPFLALGIGVDDIFLLAHAF. The Cytoplasmic portion of the chain corresponds to 479-501; sequence TKAPPDTPLPERMGECLRSTGTS. A helical membrane pass occupies residues 502 to 522; sequence VALTSVNNMVAFFMAALVPIP. Over 523–531 the chain is Extracellular; the sequence is ALRAFSLQA. The chain crosses the membrane as a helical span at residues 532-552; sequence AIVVGCNFAAVMLVFPAILSL. Over 553–686 the chain is Cytoplasmic; the sequence is DLRRRHRQRL…APLLLQTRAK (134 aa). The chain crosses the membrane as a helical span at residues 687–707; that stretch reads ALVLLFFGALLGLSLYGATLV. The Extracellular segment spans residues 708 to 963; sequence QDGLALTDVV…WEQYLGLRRC (256 aa). N-linked (GlcNAc...) asparagine glycosylation occurs at Asn812. Residues 964–984 form a helical membrane-spanning segment; that stretch reads FLLAVCILLVCTFLVCALLLL. The Cytoplasmic segment spans residues 985–991; that stretch reads SPWTAGL. The helical transmembrane segment at 992-1012 threads the bilayer; the sequence is IVLVLAMMTVELFGIMGFLGI. Residue Lys1013 is a topological domain, extracellular. Residues 1014 to 1034 traverse the membrane as a helical segment; that stretch reads LSAIPVVILVASIGIGVEFTV. The Cytoplasmic segment spans residues 1035–1064; sequence HVALGFLTSHGSRNLRAASALEQTFAPVTD. The helical transmembrane segment at 1065 to 1085 threads the bilayer; that stretch reads GAVSTLLGLLMLAGSNFDFII. Arg1086 is a topological domain (extracellular). The chain crosses the membrane as a helical span at residues 1087–1107; the sequence is YFFVVLTVLTLLGLLHGLLLL. Topologically, residues 1108–1182 are cytoplasmic; sequence PVLLSILGPP…YVHPASEEPT (75 aa).

Belongs to the patched family. In terms of tissue distribution, expressed in epithelial cells of the developing hair, tooth and whisker.

The protein resides in the membrane. Plays a role in the control of cellular growth. May have a role in epidermal development. May act as a receptor for Sonic hedgehog (SHH). This chain is Protein patched homolog 2 (Ptch2), found in Mus musculus (Mouse).